We begin with the raw amino-acid sequence, 49 residues long: Large ribosomal subunit protein bL33 (49 aa).

It belongs to the bacterial ribosomal protein bL33 family.

The sequence is that of Large ribosomal subunit protein bL33 from Clostridium beijerinckii (strain ATCC 51743 / NCIMB 8052) (Clostridium acetobutylicum).